Reading from the N-terminus, the 346-residue chain is S-adenosylmethionine:tRNA ribosyltransferase-isomerase (346 aa).

The protein belongs to the QueA family. In terms of assembly, monomer.

The protein localises to the cytoplasm. It catalyses the reaction 7-aminomethyl-7-carbaguanosine(34) in tRNA + S-adenosyl-L-methionine = epoxyqueuosine(34) in tRNA + adenine + L-methionine + 2 H(+). Its pathway is tRNA modification; tRNA-queuosine biosynthesis. Its function is as follows. Transfers and isomerizes the ribose moiety from AdoMet to the 7-aminomethyl group of 7-deazaguanine (preQ1-tRNA) to give epoxyqueuosine (oQ-tRNA). The sequence is that of S-adenosylmethionine:tRNA ribosyltransferase-isomerase from Cereibacter sphaeroides (strain KD131 / KCTC 12085) (Rhodobacter sphaeroides).